We begin with the raw amino-acid sequence, 378 residues long: Queuine tRNA-ribosyltransferase (378 aa).

The active-site Proton acceptor is the Asp-89. Substrate is bound by residues 89-93, Asp-143, Gln-187, and Gly-214; that span reads DSGGF. The RNA binding stretch occupies residues 245–251; the sequence is GVGKPQD. Asp-264 functions as the Nucleophile in the catalytic mechanism. The segment at 269–273 is RNA binding; important for wobble base 34 recognition; it reads TRNAR. Positions 302, 304, 307, and 334 each coordinate Zn(2+).

The protein belongs to the queuine tRNA-ribosyltransferase family. In terms of assembly, homodimer. Within each dimer, one monomer is responsible for RNA recognition and catalysis, while the other monomer binds to the replacement base PreQ1. It depends on Zn(2+) as a cofactor.

It carries out the reaction 7-aminomethyl-7-carbaguanine + guanosine(34) in tRNA = 7-aminomethyl-7-carbaguanosine(34) in tRNA + guanine. It participates in tRNA modification; tRNA-queuosine biosynthesis. Its function is as follows. Catalyzes the base-exchange of a guanine (G) residue with the queuine precursor 7-aminomethyl-7-deazaguanine (PreQ1) at position 34 (anticodon wobble position) in tRNAs with GU(N) anticodons (tRNA-Asp, -Asn, -His and -Tyr). Catalysis occurs through a double-displacement mechanism. The nucleophile active site attacks the C1' of nucleotide 34 to detach the guanine base from the RNA, forming a covalent enzyme-RNA intermediate. The proton acceptor active site deprotonates the incoming PreQ1, allowing a nucleophilic attack on the C1' of the ribose to form the product. After dissociation, two additional enzymatic reactions on the tRNA convert PreQ1 to queuine (Q), resulting in the hypermodified nucleoside queuosine (7-(((4,5-cis-dihydroxy-2-cyclopenten-1-yl)amino)methyl)-7-deazaguanosine). The protein is Queuine tRNA-ribosyltransferase of Blochmanniella floridana.